Reading from the N-terminus, the 143-residue chain is EKC/KEOPS complex subunit LAGE3 (143 aa).

A disordered region spans residues 1-57; the sequence is MRDADADAGGGADGGDGRGGHSCRGGVDTAAAPAGGAPPAHAPGPGRDAASAARGSR. Residues 30 to 55 show a composition bias toward low complexity; the sequence is AAAPAGGAPPAHAPGPGRDAASAARG.

This sequence belongs to the CTAG/PCC1 family. In terms of assembly, component of the EKC/KEOPS complex composed of at least GON7, TP53RK, TPRKB, OSGEP and LAGE3; the whole complex dimerizes. As to expression, ubiquitous.

The protein localises to the cytoplasm. Its subcellular location is the nucleus. Its function is as follows. Component of the EKC/KEOPS complex that is required for the formation of a threonylcarbamoyl group on adenosine at position 37 (t(6)A37) in tRNAs that read codons beginning with adenine. The complex is probably involved in the transfer of the threonylcarbamoyl moiety of threonylcarbamoyl-AMP (TC-AMP) to the N6 group of A37. LAGE3 functions as a dimerization module for the complex. This Homo sapiens (Human) protein is EKC/KEOPS complex subunit LAGE3.